A 306-amino-acid polypeptide reads, in one-letter code: Beta-lactamase (306 aa).

The signal sequence occupies residues 1-34 (MNVKRKATLKFGICIGLLCVSFTGFNSLFGSTHA). The active-site Acyl-ester intermediate is the Ser89. 251–253 (KSG) is a substrate binding site.

It belongs to the class-A beta-lactamase family.

The enzyme catalyses a beta-lactam + H2O = a substituted beta-amino acid. Functionally, this protein is a beta-lactamase with a substrate specificity for penicillins. The polypeptide is Beta-lactamase (penP) (Bacillus amyloliquefaciens (Bacillus velezensis)).